The following is an 887-amino-acid chain: Probable LRR receptor-like serine/threonine-protein kinase At5g59680 (887 aa).

A signal peptide spans 1-23 (MERSLELLLLLIRTLAIIHISQA). The Extracellular segment spans residues 25-510 (SQQGFISLDC…TKSGKSFPVT (486 aa)). N-linked (GlcNAc...) asparagine glycans are attached at residues Asn143, Asn230, Asn256, Asn289, Asn338, Asn363, Asn400, Asn416, Asn432, Asn445, Asn464, and Asn471. 3 LRR repeats span residues 411 to 434 (RITT…QNLT), 435 to 457 (TLEK…LSNM), and 459 to 481 (SLLV…LQRK). The chain crosses the membrane as a helical span at residues 511 to 531 (IVASVGSAAILIVVLVLVLFL). Over 532–887 (RKKKPSAVEV…FDAEMIPRAR (356 aa)) the chain is Cytoplasmic. Thr571 bears the Phosphothreonine mark. Residues 580 to 853 (NNFGRVVGEG…HVVIELKECL (274 aa)) enclose the Protein kinase domain. Residues 586–594 (VGEGGFGVV) and Lys608 contribute to the ATP site. At Tyr653 the chain carries Phosphotyrosine. Asp705 acts as the Proton acceptor in catalysis. Ser739 is subject to Phosphoserine. Phosphothreonine is present on residues Thr740 and Thr745. Tyr753 is subject to Phosphotyrosine.

The protein belongs to the protein kinase superfamily. Ser/Thr protein kinase family.

It is found in the membrane. The catalysed reaction is L-seryl-[protein] + ATP = O-phospho-L-seryl-[protein] + ADP + H(+). It carries out the reaction L-threonyl-[protein] + ATP = O-phospho-L-threonyl-[protein] + ADP + H(+). The chain is Probable LRR receptor-like serine/threonine-protein kinase At5g59680 from Arabidopsis thaliana (Mouse-ear cress).